We begin with the raw amino-acid sequence, 120 residues long: Membrane-anchored ubiquitin-fold protein 4 (120 aa).

The 67-residue stretch at 7 to 73 (VELKFRLYDG…LENGKTVAQC (67 aa)) folds into the Ubiquitin-like domain. C115 carries S-palmitoyl cysteine lipidation. C117 bears the Cysteine methyl ester mark. C117 carries S-farnesyl cysteine lipidation. Residues 118 to 120 (TIM) constitute a propeptide, removed in mature form.

In terms of tissue distribution, ubiquitous.

Its subcellular location is the cell membrane. May serve as docking site to facilitate the association of other proteins to the plasma membrane. The polypeptide is Membrane-anchored ubiquitin-fold protein 4 (MUB4) (Arabidopsis thaliana (Mouse-ear cress)).